The chain runs to 57 residues: Ribulose bisphosphate carboxylase large chain (57 aa).

Residues 1–2 constitute a propeptide that is removed on maturation; that stretch reads MS. Residue P3 is modified to N-acetylproline. K14 bears the N6,N6,N6-trimethyllysine mark.

The protein belongs to the RuBisCO large chain family. Type I subfamily. In terms of assembly, heterohexadecamer of 8 large chains and 8 small chains.

It is found in the plastid. The protein resides in the chloroplast. The enzyme catalyses 2 (2R)-3-phosphoglycerate + 2 H(+) = D-ribulose 1,5-bisphosphate + CO2 + H2O. It catalyses the reaction D-ribulose 1,5-bisphosphate + O2 = 2-phosphoglycolate + (2R)-3-phosphoglycerate + 2 H(+). Its function is as follows. RuBisCO catalyzes two reactions: the carboxylation of D-ribulose 1,5-bisphosphate, the primary event in carbon dioxide fixation, as well as the oxidative fragmentation of the pentose substrate in the photorespiration process. Both reactions occur simultaneously and in competition at the same active site. This chain is Ribulose bisphosphate carboxylase large chain (rbcL), found in Camellia sinensis (Tea plant).